Here is a 279-residue protein sequence, read N- to C-terminus: NADH dehydrogenase [ubiquinone] iron-sulfur protein 3, mitochondrial (279 aa).

The N-terminal 27 residues, 1 to 27 (MISRTLLKRSLPTVQFLRPFTRSSIRR), are a transit peptide targeting the mitochondrion. The segment at 249 to 279 (EPVGEGKDFTPESFKLPTPEPEPEKESDEKK) is disordered. Basic and acidic residues predominate over residues 270-279 (EPEKESDEKK).

This sequence belongs to the complex I 30 kDa subunit family. Core subunit of respiratory chain NADH dehydrogenase (Complex I).

It localises to the mitochondrion inner membrane. The enzyme catalyses a ubiquinone + NADH + 5 H(+)(in) = a ubiquinol + NAD(+) + 4 H(+)(out). In terms of biological role, core subunit of the mitochondrial membrane respiratory chain NADH dehydrogenase (Complex I) which catalyzes electron transfer from NADH through the respiratory chain, using ubiquinone as an electron acceptor. Plays a role in cell wall integrity and is involved in osmotic and oxidative resistance, yeast to hypha transition and the ability to damage and invade oral epithelial cells. The polypeptide is NADH dehydrogenase [ubiquinone] iron-sulfur protein 3, mitochondrial (ALI1) (Candida albicans (strain SC5314 / ATCC MYA-2876) (Yeast)).